The primary structure comprises 110 residues: Large ribosomal subunit protein uL22 (110 aa).

Belongs to the universal ribosomal protein uL22 family. In terms of assembly, part of the 50S ribosomal subunit.

Functionally, this protein binds specifically to 23S rRNA; its binding is stimulated by other ribosomal proteins, e.g. L4, L17, and L20. It is important during the early stages of 50S assembly. It makes multiple contacts with different domains of the 23S rRNA in the assembled 50S subunit and ribosome. In terms of biological role, the globular domain of the protein is located near the polypeptide exit tunnel on the outside of the subunit, while an extended beta-hairpin is found that lines the wall of the exit tunnel in the center of the 70S ribosome. The protein is Large ribosomal subunit protein uL22 of Janthinobacterium sp. (strain Marseille) (Minibacterium massiliensis).